Here is a 342-residue protein sequence, read N- to C-terminus: Ribosomal RNA small subunit methyltransferase H (342 aa).

Residues 36–38 (GGH), Asp-56, Phe-82, Asp-100, and Gln-107 contribute to the S-adenosyl-L-methionine site. The tract at residues 309-342 (ENRESGMGKGHGAAASRFPTPDSRFPTSPNGDAP) is disordered. Residues 333–342 (FPTSPNGDAP) show a composition bias toward polar residues.

It belongs to the methyltransferase superfamily. RsmH family.

It is found in the cytoplasm. It catalyses the reaction cytidine(1402) in 16S rRNA + S-adenosyl-L-methionine = N(4)-methylcytidine(1402) in 16S rRNA + S-adenosyl-L-homocysteine + H(+). Functionally, specifically methylates the N4 position of cytidine in position 1402 (C1402) of 16S rRNA. The sequence is that of Ribosomal RNA small subunit methyltransferase H from Xanthomonas campestris pv. campestris (strain 8004).